A 290-amino-acid polypeptide reads, in one-letter code: Phosphatidylserine decarboxylase proenzyme (290 aa).

Active-site charge relay system; for autoendoproteolytic cleavage activity residues include aspartate 96, histidine 153, and serine 257. Serine 257 functions as the Schiff-base intermediate with substrate; via pyruvic acid; for decarboxylase activity in the catalytic mechanism. At serine 257 the chain carries Pyruvic acid (Ser); by autocatalysis.

Belongs to the phosphatidylserine decarboxylase family. PSD-B subfamily. Prokaryotic type I sub-subfamily. As to quaternary structure, heterodimer of a large membrane-associated beta subunit and a small pyruvoyl-containing alpha subunit. Requires pyruvate as cofactor. Is synthesized initially as an inactive proenzyme. Formation of the active enzyme involves a self-maturation process in which the active site pyruvoyl group is generated from an internal serine residue via an autocatalytic post-translational modification. Two non-identical subunits are generated from the proenzyme in this reaction, and the pyruvate is formed at the N-terminus of the alpha chain, which is derived from the carboxyl end of the proenzyme. The autoendoproteolytic cleavage occurs by a canonical serine protease mechanism, in which the side chain hydroxyl group of the serine supplies its oxygen atom to form the C-terminus of the beta chain, while the remainder of the serine residue undergoes an oxidative deamination to produce ammonia and the pyruvoyl prosthetic group on the alpha chain. During this reaction, the Ser that is part of the protease active site of the proenzyme becomes the pyruvoyl prosthetic group, which constitutes an essential element of the active site of the mature decarboxylase.

The protein localises to the cell membrane. It catalyses the reaction a 1,2-diacyl-sn-glycero-3-phospho-L-serine + H(+) = a 1,2-diacyl-sn-glycero-3-phosphoethanolamine + CO2. The protein operates within phospholipid metabolism; phosphatidylethanolamine biosynthesis; phosphatidylethanolamine from CDP-diacylglycerol: step 2/2. Catalyzes the formation of phosphatidylethanolamine (PtdEtn) from phosphatidylserine (PtdSer). The protein is Phosphatidylserine decarboxylase proenzyme of Haemophilus influenzae (strain 86-028NP).